Reading from the N-terminus, the 1680-residue chain is Sodium channel protein type 7 subunit alpha (1680 aa).

Topologically, residues 1-117 (MLTSPEPKGL…RRAVIKVLVH (117 aa)) are cytoplasmic. An I repeat occupies 100 to 401 (TLSPLSSLRR…ILTMAYEQEK (302 aa)). The chain crosses the membrane as a helical span at residues 118–137 (PLFRLLILISVLTDSILMCM). At 138–141 (SNLP) the chain is on the extracellular side. A helical transmembrane segment spans residues 142–167 (EWILAVENTLLGIYTFEILVKVIARG). Residues 168 to 178 (IWAGSFSFLGD) are Cytoplasmic-facing. A helical membrane pass occupies residues 179 to 196 (LWNWLDFSVTLFELITRS). Residues 197-200 (SPLS) lie on the Extracellular side of the membrane. Residues 201–219 (SLPMFKTIRTLRILKIIPL) traverse the membrane as a helical segment. Topologically, residues 220–237 (NHGLQSIVVTLVQCLKKL) are cytoplasmic. The helical transmembrane segment at 238-259 (LGAIALALFFLTVSSLFGMGLF) threads the bilayer. The Extracellular portion of the chain corresponds to 260–338 (MGNLKHKCVR…PDNGFTSFDN (79 aa)). A disulfide bridge connects residues C267 and C307. Residues N281 and N309 are each glycosylated (N-linked (GlcNAc...) asparagine). The segment at residues 339–366 (FGWALLAMFRLMTQDYPELLYHQILYAS) is an intramembrane region (pore-forming). Position 367 (G367) is a topological domain, extracellular. Residues 368 to 407 (KIYMIFFVLISFWFAFYMASLFLGILTMAYEQEKQRASEE) form a helical membrane-spanning segment. The Cytoplasmic segment spans residues 408–505 (SRDMDSKCHQ…EFADRIITHP (98 aa)). The stretch at 487 to 756 (CSPCWIKLNE…QLAVAWIKMV (270 aa)) is one II repeat. The helical transmembrane segment at 506 to 521 (LFDLFLVICIILNICF) threads the bilayer. The Extracellular portion of the chain corresponds to 522–530 (LALEHFPMS). Residues 531–559 (EELMSLLAIGNLVFIGIYTIEMILKIIAM) form a helical membrane-spanning segment. Over 560-568 (HPYGYFQIS) the chain is Cytoplasmic. The chain crosses the membrane as a helical span at residues 569–586 (WHIFDSILVVLGLTEMLL). Topologically, residues 587–592 (ADIEEI) are extracellular. A helical membrane pass occupies residues 593–608 (TVFILVPLIFIKLGKY). Topologically, residues 609 to 625 (APPFKNLMRILGRALVA) are cytoplasmic. Residues 626–654 (LKDLVLLVSIFIYFSAVFGMKLFGRSYKD) form a helical membrane-spanning segment. Residues 655–672 (CVCHVDQDCQRQRWHMSD) are Extracellular-facing. 2 disulfides stabilise this stretch: C657–C663 and C695–C704. Residues 673–699 (FLHAYVTVFRILCGEWIETLWECMEVA) constitute an intramembrane region (pore-forming). G700 is a topological domain (extracellular). Residues 701-731 (EAWCIPFYMMVILIGNLLILYLFVALVSSFA) traverse the membrane as a helical segment. At 732–933 (SYDATTEVSK…KTCCKIVENS (202 aa)) the chain is on the cytoplasmic side. The span at 807–833 (DQSSGTEKTPVTESESQSLIASPSVSE) shows a compositional bias: polar residues. Residues 807–874 (DQSSGTEKTP…MKQSSSSECS (68 aa)) form a disordered region. At S842 the chain carries Phosphoserine. One copy of the III repeat lies at 915-1223 (NGKIWRNIRK…KKQYRALKKL (309 aa)). A helical membrane pass occupies residues 934–952 (WFECFIGLVTLLCTGTLAL). At 953 to 960 (EDIYIDQR) the chain is on the extracellular side. Residues 961 to 989 (KTIKIFLEYGDMIFAYIFILEMLLKWVAY) traverse the membrane as a helical segment. Topologically, residues 990–997 (GFKAYFSN) are cytoplasmic. The chain crosses the membrane as a helical span at residues 998–1019 (NWYKLDFMVVIVLCLSLIGKTR). Residue E1020 is a topological domain, extracellular. Residues 1021–1039 (DLNPLASIKFLRALRVLSQ) form a helical membrane-spanning segment. Residues 1040–1054 (FERMKVVLRALIKTT) are Cytoplasmic-facing. The chain crosses the membrane as a helical span at residues 1055-1079 (LPAVSVFLVCLMIWLLFSVMGVFLF). Residues 1080 to 1126 (AGKFYECIDPTRGERFSVFEVMNKSQCENLVFNESMPWENAKLNFDN) lie on the Extracellular side of the membrane. C1086 and C1106 are joined by a disulfide. Residues N1102 and N1112 are each glycosylated (N-linked (GlcNAc...) asparagine). Positions 1127–1153 (VGNGFLSLFQVATFNGWISIMNSAIDS) form an intramembrane region, pore-forming. Over 1154–1166 (VGVYMQPSFEHSL) the chain is Extracellular. A helical membrane pass occupies residues 1167-1201 (HMYTYFIIFVVFGLFLPLCMLIGVIIRNFNKQKIK). At 1202-1249 (QGGSNIFITVKQKKQYRALKKLLYADSQKPAARPRNKFQGFICDVVTH) the chain is on the cytoplasmic side. One copy of the IV repeat lies at 1232–1530 (AARPRNKFQG…WNRFDPDRTQ (299 aa)). Residues 1250 to 1271 (RVFNVIIILLICFQATTIMIQN) traverse the membrane as a helical segment. Over 1272 to 1275 (DEQS) the chain is Extracellular. A helical transmembrane segment spans residues 1276 to 1304 (PQIETAVFWMNSLFTMLFTLECILKLTAF). Over 1305–1311 (RCHYFTS) the chain is Cytoplasmic. The chain crosses the membrane as a helical span at residues 1312-1337 (AWNVHDFMVVVFSITGLLLPLSIGQY). Residues 1338–1340 (FVP) are Extracellular-facing. Residues 1341–1361 (PSLVQLLLLSRIIHVLRPGKG) traverse the membrane as a helical segment. The Cytoplasmic segment spans residues 1362-1376 (PKVFHDLMLPLMLSL). The chain crosses the membrane as a helical span at residues 1377–1401 (PALLNIALLIFLVMFIYAIFGMYNF). The Extracellular portion of the chain corresponds to 1402 to 1419 (AYVKKEAGINDVSNFETF). Residues 1420-1443 (GSSMLCLFQVTTFSGWDGMLDAIF) constitute an intramembrane region (pore-forming). The Extracellular segment spans residues 1444-1467 (NSQWSDCDPDKINPGTQVRGDCGS). Cysteines 1450 and 1465 form a disulfide. Residues 1468–1503 (PSVGIFYFVSYILISWLIIVNMYVVLIMEFLSIPSK) traverse the membrane as a helical segment. Over 1504 to 1680 (RKNRTLSEDD…EEKASIQTQI (177 aa)) the chain is Cytoplasmic. Positions 1646 to 1680 (KIQDIPEIDDGREDPNSKGVHSGQIEEKASIQTQI) are disordered.

The protein belongs to the sodium channel (TC 1.A.1.10) family. SCN7A subfamily. As to quaternary structure, the sodium channel formed by SCN7A is probably a heterooligomeric complex consisting of the ion conducting pore forming alpha subunit SCN7A and regulatory beta subunits such as SCN3B. Interacts with ATP1A1; activates ATP1A1 and thereby indirectly signals to nearby neurons to regulate sodium homeostasis. In terms of tissue distribution, not tissue specific but widely expressed.

The protein resides in the cell membrane. The catalysed reaction is Na(+)(in) = Na(+)(out). In terms of biological role, sodium leak channel functioning as an osmosensor regulating sodium ion levels in various tissues and organs. While most sodium channels are voltage-gated, SCN7A is not and lets sodium flow through membrane along its concentration gradient. In glial cells of the central nervous system, senses body-fluid sodium levels and controls salt intake behavior as well as voluntary water intake through activation of nearby neurons to maintain appropriate sodium levels in the body. By mediating sodium influx into keratinocytes, also plays a role in skin barrier homeostasis. This is Sodium channel protein type 7 subunit alpha from Rattus norvegicus (Rat).